The primary structure comprises 143 residues: Glutamyl-tRNA(Gln) amidotransferase subunit C, chloroplastic/mitochondrial (143 aa).

It belongs to the GatC family. Subunit of the heterotrimeric GatCAB amidotransferase (AdT) complex, composed of A, B and C subunits.

It localises to the mitochondrion. Its subcellular location is the plastid. The protein localises to the chloroplast. It catalyses the reaction L-glutamyl-tRNA(Gln) + L-glutamine + ATP + H2O = L-glutaminyl-tRNA(Gln) + L-glutamate + ADP + phosphate + H(+). In terms of biological role, allows the formation of correctly charged Gln-tRNA(Gln) through the transamidation of misacylated Glu-tRNA(Gln) in chloroplasts and mitochondria. The reaction takes place in the presence of glutamine and ATP through an activated gamma-phospho-Glu-tRNA(Gln). The protein is Glutamyl-tRNA(Gln) amidotransferase subunit C, chloroplastic/mitochondrial of Ricinus communis (Castor bean).